Here is a 361-residue protein sequence, read N- to C-terminus: Beta-hexosaminidase (361 aa).

Residues Asp69, Arg77, Arg144, and 174–175 contribute to the substrate site; that span reads KH. Residue His187 is the Proton donor/acceptor of the active site. Asp258 functions as the Nucleophile in the catalytic mechanism.

This sequence belongs to the glycosyl hydrolase 3 family. NagZ subfamily.

The protein localises to the cytoplasm. The catalysed reaction is Hydrolysis of terminal non-reducing N-acetyl-D-hexosamine residues in N-acetyl-beta-D-hexosaminides.. It functions in the pathway cell wall biogenesis; peptidoglycan recycling. Its function is as follows. Plays a role in peptidoglycan recycling by cleaving the terminal beta-1,4-linked N-acetylglucosamine (GlcNAc) from peptide-linked peptidoglycan fragments, giving rise to free GlcNAc, anhydro-N-acetylmuramic acid and anhydro-N-acetylmuramic acid-linked peptides. This chain is Beta-hexosaminidase, found in Neisseria meningitidis serogroup C (strain 053442).